Here is a 167-residue protein sequence, read N- to C-terminus: Protein MIX23 (167 aa).

The segment at 81–108 is disordered; sequence QLDQDRNTSKSPLKSQQQLPSSSTTQVS. Positions 89–106 are enriched in low complexity; the sequence is SKSPLKSQQQLPSSSTTQ.

It belongs to the MIX23 family.

The polypeptide is Protein MIX23 (cid2) (Schizosaccharomyces pombe (strain 972 / ATCC 24843) (Fission yeast)).